The following is a 319-amino-acid chain: NADH-ubiquinone oxidoreductase chain 1 (319 aa).

8 helical membrane passes run 5-25 (TINS…LTLM), 72-92 (LLIS…TPIP), 102-122 (LGLL…LWAG), 146-166 (VTLG…TMQL), 173-193 (FTWL…STLA), 225-245 (FFLT…ILFI), 254-274 (ELFL…FLWI), and 295-315 (LPLT…TSGI).

Belongs to the complex I subunit 1 family.

The protein resides in the mitochondrion inner membrane. It carries out the reaction a ubiquinone + NADH + 5 H(+)(in) = a ubiquinol + NAD(+) + 4 H(+)(out). Its function is as follows. Core subunit of the mitochondrial membrane respiratory chain NADH dehydrogenase (Complex I) that is believed to belong to the minimal assembly required for catalysis. Complex I functions in the transfer of electrons from NADH to the respiratory chain. The immediate electron acceptor for the enzyme is believed to be ubiquinone. The sequence is that of NADH-ubiquinone oxidoreductase chain 1 (MT-ND1) from Varanus flavescens (Yellow monitor).